The primary structure comprises 217 residues: Probable D-methionine transport system permease protein MetI (217 aa).

The region spanning 13–207 (TLETLYMGFI…LIVMLSQKLG (195 aa)) is the ABC transmembrane type-1 domain. Transmembrane regions (helical) follow at residues 20-40 (GFIATLFAIVIGLPIGLLAFL), 58-78 (VIINIGRSVPFIILLIILLPF), 81-101 (LVVGTTLGTTAAIVPLSVSAI), 143-163 (IPILINGITLTLVALIGYSAM), and 184-204 (NMIYVKWIATIIIVLIVMLSQ).

This sequence belongs to the binding-protein-dependent transport system permease family. CysTW subfamily.

The protein resides in the cell inner membrane. Its function is as follows. Part of the binding-protein-dependent transport system for D-methionine. Probably responsible for the translocation of the substrate across the membrane. The protein is Probable D-methionine transport system permease protein MetI (metI) of Pasteurella multocida (strain Pm70).